Reading from the N-terminus, the 171-residue chain is MKLKKTIGAMALATLFATMGASAVEKTISVTASVDPTVDLLQSDGSALPNSVALTYSPAVNNFEAHTINTVVHTNDSDKGVVVKLSADPVLSNVLNPTLQIPVSVNFAGKPLSTTGITIDSNDLNFASSGVNKVSSTQKLSIHADATRVTGGALTAGQYQGLVSIILTKST.

Positions 1 to 23 (MKLKKTIGAMALATLFATMGASA) are cleaved as a signal peptide.

Belongs to the fimbrial CS1 protein family.

The protein localises to the fimbrium. Fimbriae (also called pili), polar filaments radiating from the surface of the bacterium to a length of 0.5-1.5 micrometers and numbering 100-300 per cell, enable bacteria to colonize the epithelium of specific host organs. The protein is CS1 fimbrial subunit A (csoA) of Escherichia coli.